Here is a 1392-residue protein sequence, read N- to C-terminus: FERM and PDZ domain-containing protein 2 (1392 aa).

One can recognise a KIND domain in the interval 15 to 197 (VTLASALQVR…SEVERRVVEE (183 aa)). Residues 211 to 246 (SRLHQADGESPGAPASDALQPRRVSERSAETQSSLE) form a disordered region. In terms of domain architecture, FERM spans 342 to 642 (CVVLLNGRCL…WFNAQTGSKH (301 aa)). The PDZ 1 domain occupies 775–861 (GLFGEPNQDI…MAVRMIQNSP (87 aa)). Residues 903-930 (GRQSPHIHDQDRSVRGTEMAQGAGSCPP) are disordered. The segment covering 908–917 (HIHDQDRSVR) has biased composition (basic and acidic residues). The interval 937–1027 (TGEIYFVELV…VARLVLERRG (91 aa)) is interaction with GRIN2A and GRIN2B. PDZ domains lie at 950-1035 (GTLG…PQCP) and 1079-1167 (RGLG…PEME). Positions 1186–1236 (CAGSEQSPSLDQEDNWRDSTSLDAGEGLSPGPESSYKDVRQVKGDREKERP) are disordered. The span at 1220–1236 (SYKDVRQVKGDREKERP) shows a compositional bias: basic and acidic residues.

In terms of assembly, interacts (via the second PDZ domain) with CTNND2 (via the extreme C-terminus). Interacts (via the second PDZ domain) with PKP4 (via the extreme C-terminus); the interaction directs FRMPD2 to the basolateral membranes. Interacts (via the second PDZ domain) with ARVCF (via the extreme C-terminus). Interacts (via the second PDZ domain) with NMDAR subunits GRIN2A/GLUN2A and GRIN2B/GLUN2B (via the extreme C-terminus); the interaction is direct and is likely to promote NMDAR-mediated neural signal transmission. Binds GRIN2A with lower affinity than GRIN2B. Interacts (via the third PDZ domain) with LRIT1 (via the extreme C-terminus); the interaction leads to their colocalization in photoreceptor synapses. Interacts with NOD2; the interaction is likely to trigger NOD2-mediated nuclear factor kappaB activation.

It localises to the cytoplasm. Its subcellular location is the postsynaptic density. The protein resides in the basolateral cell membrane. The protein localises to the cell junction. It is found in the tight junction. Its function is as follows. Functions as a scaffold protein and likely plays a role in N-methyl-D-aspartic acid receptor (NMDAR)-mediated synaptic excitatory transmission. May be involved in synapse formation in cone photoreceptor cells. May play a role in the regulation of tight junction formation. Binds phosphatidylinositol 3,4-bisphosphate (PtdIns(3,4)P2). May pNF-kappa-Blay a role in the regulation of NOD2-mediated NF-kappa-B activation in immune response. This chain is FERM and PDZ domain-containing protein 2, found in Mus musculus (Mouse).